The following is a 233-amino-acid chain: tRNA1(Val) (adenine(37)-N6)-methyltransferase (233 aa).

The protein belongs to the methyltransferase superfamily. tRNA (adenine-N(6)-)-methyltransferase family.

It localises to the cytoplasm. It carries out the reaction adenosine(37) in tRNA1(Val) + S-adenosyl-L-methionine = N(6)-methyladenosine(37) in tRNA1(Val) + S-adenosyl-L-homocysteine + H(+). Specifically methylates the adenine in position 37 of tRNA(1)(Val) (anticodon cmo5UAC). The chain is tRNA1(Val) (adenine(37)-N6)-methyltransferase from Shewanella amazonensis (strain ATCC BAA-1098 / SB2B).